We begin with the raw amino-acid sequence, 211 residues long: tRNA (guanine-N(7)-)-methyltransferase (211 aa).

Glu43, Glu68, Asp95, and Asp117 together coordinate S-adenosyl-L-methionine. Residue Asp117 is part of the active site. Residues Lys121, Asp153, and 190–193 (TEYE) contribute to the substrate site.

This sequence belongs to the class I-like SAM-binding methyltransferase superfamily. TrmB family.

It carries out the reaction guanosine(46) in tRNA + S-adenosyl-L-methionine = N(7)-methylguanosine(46) in tRNA + S-adenosyl-L-homocysteine. Its pathway is tRNA modification; N(7)-methylguanine-tRNA biosynthesis. In terms of biological role, catalyzes the formation of N(7)-methylguanine at position 46 (m7G46) in tRNA. In Staphylococcus carnosus (strain TM300), this protein is tRNA (guanine-N(7)-)-methyltransferase.